Consider the following 394-residue polypeptide: T-cell acute lymphocytic leukemia protein 1 (394 aa).

Positions 1–17 (MSLKMMERLSTDMDGTR) are enriched in basic and acidic residues. A disordered region spans residues 1-49 (MSLKMMERLSTDMDGTRDVASPPARQDAAEPERTVELSGVKEGAAPNSP). 7 tandem repeats follow at residues 83–89 (TELCRAT), 94–100 (TELCRAP), 105–111 (TELCRAP), 116–122 (TELCRAP), 127–133 (TELCRPP), 149–155 (SELCRAP), and 167–173 (TELCRPP). The interval 83–173 (TELCRATLTP…TATTELCRPP (91 aa)) is 7 X 7 AA approximate repeats of [TS]-E-L-C-R-[AP]-P. A bHLH domain is found at 262–314 (VRRIFTNSRERWRQQNVNGAFAELRKLIPTHPPDKKLSKNEILRLAMKYINFL). Positions 347–394 (LSPNSSCGSSLDGAPSPDSYSEEHDALDSKHSRNLHQAMLPIDGSGQR) are disordered. Over residues 367–377 (SEEHDALDSKH) the composition is skewed to basic and acidic residues.

In terms of tissue distribution, first expressed in patches on the ventral side of the embryo in a region that will give rise to hematopoietic tissue. By late neurula stages, expressed throughout the ventral blood island region. By tailbud stages, expression extends to probable vascular progenitor cells, but is excluded from the presumptive liver anlage. Also expressed in the central nervous system at the tailbud stage.

Its subcellular location is the nucleus. In terms of biological role, transcription factor that acts synergistically with lmo2 and gata1 to specify embryonic dorsal mesoderm to a hematopoietic fate. The polypeptide is T-cell acute lymphocytic leukemia protein 1 (Xenopus laevis (African clawed frog)).